We begin with the raw amino-acid sequence, 183 residues long: Peptide deformylase (183 aa).

Fe cation is bound by residues Cys-110 and His-153. Glu-154 is an active-site residue. His-157 is a Fe cation binding site.

Belongs to the polypeptide deformylase family. Fe(2+) serves as cofactor.

It catalyses the reaction N-terminal N-formyl-L-methionyl-[peptide] + H2O = N-terminal L-methionyl-[peptide] + formate. Removes the formyl group from the N-terminal Met of newly synthesized proteins. Requires at least a dipeptide for an efficient rate of reaction. N-terminal L-methionine is a prerequisite for activity but the enzyme has broad specificity at other positions. The polypeptide is Peptide deformylase (Shouchella clausii (strain KSM-K16) (Alkalihalobacillus clausii)).